The primary structure comprises 603 residues: Proline--tRNA ligase (603 aa).

It belongs to the class-II aminoacyl-tRNA synthetase family. ProS type 1 subfamily. In terms of assembly, homodimer.

The protein localises to the cytoplasm. It catalyses the reaction tRNA(Pro) + L-proline + ATP = L-prolyl-tRNA(Pro) + AMP + diphosphate. In terms of biological role, catalyzes the attachment of proline to tRNA(Pro) in a two-step reaction: proline is first activated by ATP to form Pro-AMP and then transferred to the acceptor end of tRNA(Pro). As ProRS can inadvertently accommodate and process non-cognate amino acids such as alanine and cysteine, to avoid such errors it has two additional distinct editing activities against alanine. One activity is designated as 'pretransfer' editing and involves the tRNA(Pro)-independent hydrolysis of activated Ala-AMP. The other activity is designated 'posttransfer' editing and involves deacylation of mischarged Ala-tRNA(Pro). The misacylated Cys-tRNA(Pro) is not edited by ProRS. The sequence is that of Proline--tRNA ligase from Microcystis aeruginosa (strain NIES-843 / IAM M-2473).